We begin with the raw amino-acid sequence, 168 residues long: Peptide deformylase (168 aa).

Residues C92 and H134 each contribute to the Fe cation site. Residue E135 is part of the active site. Fe cation is bound at residue H138.

It belongs to the polypeptide deformylase family. Requires Fe(2+) as cofactor.

It catalyses the reaction N-terminal N-formyl-L-methionyl-[peptide] + H2O = N-terminal L-methionyl-[peptide] + formate. Removes the formyl group from the N-terminal Met of newly synthesized proteins. Requires at least a dipeptide for an efficient rate of reaction. N-terminal L-methionine is a prerequisite for activity but the enzyme has broad specificity at other positions. The sequence is that of Peptide deformylase from Hahella chejuensis (strain KCTC 2396).